Consider the following 254-residue polypeptide: Glc operon transcriptional activator (254 aa).

The HTH gntR-type domain occupies 6 to 74 (RPICEVVAES…QGRDSRVARL (69 aa)). Residues 34 to 53 (ERRLCEKLGFSRSALREGLT) constitute a DNA-binding region (H-T-H motif).

In terms of biological role, transcriptional activator of the glcDEFGB operon which is associated with glycolate utilization, and encodes malate synthase G and the genes needed for glycolate oxidase activity. Also negatively regulates the transcription of its own gene. Glycolate acts as an effector, but GlcC can also use acetate as an alternative effector. The sequence is that of Glc operon transcriptional activator (glcC) from Escherichia coli O6:H1 (strain CFT073 / ATCC 700928 / UPEC).